Consider the following 213-residue polypeptide: Adenylate kinase (213 aa).

Residue 10–15 coordinates ATP; sequence GSGKGS. Residues 30 to 60 are NMP; sequence STGNLFRAILKEDSELARKIKEINVSGGKLV. AMP is bound by residues Thr31, Arg36, 58–60, 87–90, and Gln94; these read KLV and GYPR. Residues 123–160 are LID; sequence GRWMCPKCAGIYNIHFKKPQVHGLCDNDQATLYQRADD. Residue Arg124 coordinates ATP. Cys127 and Cys130 together coordinate Zn(2+). 133–134 lines the ATP pocket; it reads IY. Positions 147 and 150 each coordinate Zn(2+). AMP contacts are provided by Arg157 and Arg168. ATP is bound at residue Gln196.

This sequence belongs to the adenylate kinase family. Monomer.

The protein localises to the cytoplasm. It carries out the reaction AMP + ATP = 2 ADP. The protein operates within purine metabolism; AMP biosynthesis via salvage pathway; AMP from ADP: step 1/1. Functionally, catalyzes the reversible transfer of the terminal phosphate group between ATP and AMP. Plays an important role in cellular energy homeostasis and in adenine nucleotide metabolism. The polypeptide is Adenylate kinase (Ureaplasma parvum serovar 3 (strain ATCC 27815 / 27 / NCTC 11736)).